The sequence spans 80 residues: DinI-like protein Z2083/ECs2153 (80 aa).

This chain is DinI-like protein Z2083/ECs2153, found in Escherichia coli O157:H7.